Consider the following 173-residue polypeptide: Adenine phosphoribosyltransferase (173 aa).

The protein belongs to the purine/pyrimidine phosphoribosyltransferase family. Homodimer.

The protein localises to the cytoplasm. The enzyme catalyses AMP + diphosphate = 5-phospho-alpha-D-ribose 1-diphosphate + adenine. It functions in the pathway purine metabolism; AMP biosynthesis via salvage pathway; AMP from adenine: step 1/1. Catalyzes a salvage reaction resulting in the formation of AMP, that is energically less costly than de novo synthesis. This chain is Adenine phosphoribosyltransferase, found in Listeria monocytogenes serovar 1/2a (strain ATCC BAA-679 / EGD-e).